The chain runs to 185 residues: Ribosome-recycling factor (185 aa).

A disordered region spans residues 136–159 (NEQLKSQQKDGKMSEDELKRSQDE).

The protein belongs to the RRF family.

The protein resides in the cytoplasm. In terms of biological role, responsible for the release of ribosomes from messenger RNA at the termination of protein biosynthesis. May increase the efficiency of translation by recycling ribosomes from one round of translation to another. In Pelotomaculum thermopropionicum (strain DSM 13744 / JCM 10971 / SI), this protein is Ribosome-recycling factor.